We begin with the raw amino-acid sequence, 376 residues long: Lipid-A-disaccharide synthase (376 aa).

Belongs to the LpxB family.

The enzyme catalyses a lipid X + a UDP-2-N,3-O-bis[(3R)-3-hydroxyacyl]-alpha-D-glucosamine = a lipid A disaccharide + UDP + H(+). It functions in the pathway bacterial outer membrane biogenesis; LPS lipid A biosynthesis. Condensation of UDP-2,3-diacylglucosamine and 2,3-diacylglucosamine-1-phosphate to form lipid A disaccharide, a precursor of lipid A, a phosphorylated glycolipid that anchors the lipopolysaccharide to the outer membrane of the cell. This is Lipid-A-disaccharide synthase from Coxiella burnetii (strain CbuG_Q212) (Coxiella burnetii (strain Q212)).